The primary structure comprises 785 residues: Mitochondrial intermediate peptidase (785 aa).

The N-terminal 27 residues, 1–27 (MLKAVMPRPWVCSRCVKRQIQSSRGLA), are a transit peptide targeting the mitochondrion. The interval 26 to 52 (LATASTQYREPRPVPTDHSAPGAKHDD) is disordered. His-566 lines the Zn(2+) pocket. Residue Glu-567 is part of the active site. Zn(2+) is bound by residues His-570 and His-573.

It belongs to the peptidase M3 family. Zn(2+) is required as a cofactor.

It localises to the mitochondrion matrix. It carries out the reaction Release of an N-terminal octapeptide as second stage of processing of some proteins imported into the mitochondrion.. Cleaves proteins, imported into the mitochondrion, to their mature size. While most mitochondrial precursor proteins are processed to the mature form in one step by mitochondrial processing peptidase (MPP), the sequential cleavage by MIP of an octapeptide after initial processing by MPP is a required step for a subgroup of nuclear-encoded precursor proteins destined for the matrix or the inner membrane. This chain is Mitochondrial intermediate peptidase (oct1), found in Sclerotinia sclerotiorum (strain ATCC 18683 / 1980 / Ss-1) (White mold).